A 226-amino-acid polypeptide reads, in one-letter code: UPF0173 metal-dependent hydrolase SRU_1937 (226 aa).

Belongs to the UPF0173 family.

The polypeptide is UPF0173 metal-dependent hydrolase SRU_1937 (Salinibacter ruber (strain DSM 13855 / M31)).